Reading from the N-terminus, the 78-residue chain is UPF0369 protein RP167 (78 aa).

The protein belongs to the SDHAF4 family.

This is UPF0369 protein RP167 from Rickettsia prowazekii (strain Madrid E).